Consider the following 1795-residue polypeptide: Protein TIC 214 (1795 aa).

6 helical membrane-spanning segments follow: residues 19–39 (IINS…FSIG), 68–88 (FIAG…HLAL), 91–111 (PHTI…WNNH), 133–153 (VFLN…SSML), 176–196 (VGWL…LVWI), and 227–247 (IFSI…PSPI). Positions 1490 to 1517 (EKESTGQVEFESDKEQQRNSESALSNQE) are disordered. Over residues 1508–1517 (NSESALSNQE) the composition is skewed to polar residues.

The protein belongs to the TIC214 family. Part of the Tic complex.

It localises to the plastid. It is found in the chloroplast inner membrane. Involved in protein precursor import into chloroplasts. May be part of an intermediate translocation complex acting as a protein-conducting channel at the inner envelope. This chain is Protein TIC 214, found in Crucihimalaya wallichii (Rock-cress).